The chain runs to 396 residues: Phosphoglycerate kinase (396 aa).

Substrate contacts are provided by residues 21–23 (DIN), R36, 59–62 (HFGR), R118, and R151. ATP contacts are provided by residues K201, E323, and 353 to 356 (GGDT).

This sequence belongs to the phosphoglycerate kinase family. In terms of assembly, monomer.

It is found in the cytoplasm. It catalyses the reaction (2R)-3-phosphoglycerate + ATP = (2R)-3-phospho-glyceroyl phosphate + ADP. The protein operates within carbohydrate degradation; glycolysis; pyruvate from D-glyceraldehyde 3-phosphate: step 2/5. In Ruegeria sp. (strain TM1040) (Silicibacter sp.), this protein is Phosphoglycerate kinase.